Consider the following 131-residue polypeptide: UPF0382 inner membrane protein YgdD (131 aa).

At 1–4 (MTSR) the chain is on the periplasmic side. A helical membrane pass occupies residues 5 to 25 (FMLIFAAISGFIFVALGAFGA). The Cytoplasmic segment spans residues 26–64 (HVLSKTMGAVEMGWIQTGLEYQAFHTLAILGLAVAMQRR). Residues 65–85 (ISIWFYWSSVFLALGTVLFSG) form a helical membrane-spanning segment. At 86–97 (SLYCLALSHLRL) the chain is on the periplasmic side. The chain crosses the membrane as a helical span at residues 98–118 (WAFVTPVGGVSFLAGWALMLV). At 119–131 (GAIRLKRKGVSHE) the chain is on the cytoplasmic side.

This sequence belongs to the UPF0382 family.

The protein localises to the cell inner membrane. The protein is UPF0382 inner membrane protein YgdD (ygdD) of Escherichia coli O157:H7.